The sequence spans 777 residues: Subtilisin-like protease SBT3.7 (777 aa).

The first 22 residues, 1 to 22 (MRNHRTSIFVVLSLVIILNGQS), serve as a signal peptide directing secretion. Residues 23-113 (GFLPRAGAES…VIPDRFYKPA (91 aa)) constitute a propeptide, activation peptide. One can recognise an Inhibitor I9 domain in the interval 34–111 (VHIVYLGEKQ…VHVIPDRFYK (78 aa)). In terms of domain architecture, Peptidase S8 spans 117–624 (TWDYLGLSPT…GGLVNPEKAT (508 aa)). Residue Asn133 is glycosylated (N-linked (GlcNAc...) asparagine). Asp147 acts as the Charge relay system in catalysis. N-linked (GlcNAc...) asparagine glycans are attached at residues Asn180 and Asn206. His222 serves as the catalytic Charge relay system. N-linked (GlcNAc...) asparagine glycosylation is found at Asn237, Asn397, Asn412, and Asn540. The 96-residue stretch at 386–481 (SLVYPENPGN…ELGTYILFYI (96 aa)) folds into the PA domain. The active-site Charge relay system is Ser555. N-linked (GlcNAc...) asparagine glycans are attached at residues Asn647, Asn723, and Asn758.

Belongs to the peptidase S8 family.

It is found in the secreted. This is Subtilisin-like protease SBT3.7 from Arabidopsis thaliana (Mouse-ear cress).